The chain runs to 619 residues: ETS-related transcription factor Elf-1 (619 aa).

4 positions are modified to phosphoserine: serine 110, serine 163, serine 167, and serine 168. Residues 158–199 form a disordered region; it reads EKYADSPGASSPEQPKRKKGRKTKPPRPDSPATTPNISVKKK. The segment covering 173–182 has biased composition (basic residues); sequence KRKKGRKTKP. Serine 187 bears the Phosphoserine mark. Position 190 is a phosphothreonine (threonine 190). The ETS DNA-binding region spans 208-290; sequence IYLWEFLLAL…EGQRLVYQFK (83 aa). Residues 300–366 form a disordered region; that stretch reads NDEDPSSSIE…DPVEVAQPSE (67 aa). A compositionally biased stretch (low complexity) spans 305–321; that stretch reads SSSIESSDPSLSSSATS. Polar residues predominate over residues 322–335; that stretch reads NRNQTSRSRVSSSP. The residue at position 432 (serine 432) is a Phosphoserine. The tract at residues 564–592 is disordered; it reads TLTQEVEKKESEDHLKENTEKTEQQPQPY. A compositionally biased stretch (basic and acidic residues) spans 568-586; that stretch reads EVEKKESEDHLKENTEKTE.

Belongs to the ETS family. In terms of assembly, binds to the underphosphorylated form of RB. May interact with other transcription factors in order to regulate specific genes. Interacts with RUNX1. In terms of tissue distribution, in fetal tissues, it is highly expressed in heart, lung liver and kidney, and weakly expressed in brain. In adult, it is highly expressed in pancreas, spleen, thymus and peripheral blood leukocytes, expressed at moderate levels in heart, placenta, lung, liver, skeletal muscle, kidney, prostate, ovary, small intestine and colon, and weakly expressed in brain and testis.

The protein resides in the nucleus. In terms of biological role, transcription factor that activates the LYN and BLK promoters. Appears to be required for the T-cell-receptor-mediated trans activation of HIV-2 gene expression. Binds specifically to two purine-rich motifs in the HIV-2 enhancer. The sequence is that of ETS-related transcription factor Elf-1 (ELF1) from Homo sapiens (Human).